Here is a 510-residue protein sequence, read N- to C-terminus: NAD(P)H-quinone oxidoreductase subunit 2 B, chloroplastic (510 aa).

13 consecutive transmembrane segments (helical) span residues 24-44 (LLLF…GLIL), 57-77 (IPWL…SLLF), 99-119 (IFQF…VEYI), 124-144 (MAIT…MFLC), 149-169 (LITI…LSGY), 183-203 (YLLM…WLYG), 227-247 (PGIS…LSPA), 295-315 (WHLL…LIAI), 323-343 (MLAY…IVGD), 354-374 (YMLF…LFGL), 395-415 (ALSL…AGFF), 418-438 (LYLF…IGLL), and 484-504 (MIVC…IIAI).

The protein belongs to the complex I subunit 2 family. As to quaternary structure, NDH is composed of at least 16 different subunits, 5 of which are encoded in the nucleus.

The protein localises to the plastid. It is found in the chloroplast thylakoid membrane. The catalysed reaction is a plastoquinone + NADH + (n+1) H(+)(in) = a plastoquinol + NAD(+) + n H(+)(out). It carries out the reaction a plastoquinone + NADPH + (n+1) H(+)(in) = a plastoquinol + NADP(+) + n H(+)(out). NDH shuttles electrons from NAD(P)H:plastoquinone, via FMN and iron-sulfur (Fe-S) centers, to quinones in the photosynthetic chain and possibly in a chloroplast respiratory chain. The immediate electron acceptor for the enzyme in this species is believed to be plastoquinone. Couples the redox reaction to proton translocation, and thus conserves the redox energy in a proton gradient. The chain is NAD(P)H-quinone oxidoreductase subunit 2 B, chloroplastic from Lactuca sativa (Garden lettuce).